Consider the following 77-residue polypeptide: Exodeoxyribonuclease 7 small subunit (77 aa).

This sequence belongs to the XseB family. Heterooligomer composed of large and small subunits.

The protein localises to the cytoplasm. The catalysed reaction is Exonucleolytic cleavage in either 5'- to 3'- or 3'- to 5'-direction to yield nucleoside 5'-phosphates.. Functionally, bidirectionally degrades single-stranded DNA into large acid-insoluble oligonucleotides, which are then degraded further into small acid-soluble oligonucleotides. The polypeptide is Exodeoxyribonuclease 7 small subunit (Alkaliphilus oremlandii (strain OhILAs) (Clostridium oremlandii (strain OhILAs))).